The following is a 1039-amino-acid chain: Probable inorganic carbon transporter subunit DabA 1 (1039 aa).

The Zn(2+) site is built by Cys-462, Asp-464, His-721, and Cys-736.

This sequence belongs to the inorganic carbon transporter (TC 9.A.2) DabA family. Forms a complex with DabB. The cofactor is Zn(2+).

The protein localises to the cell inner membrane. Its function is as follows. Part of an energy-coupled inorganic carbon pump. This is Probable inorganic carbon transporter subunit DabA 1 from Nitrobacter hamburgensis (strain DSM 10229 / NCIMB 13809 / X14).